We begin with the raw amino-acid sequence, 316 residues long: 2-phospho-L-lactate guanylyltransferase (316 aa).

The span at 72–85 shows a compositional bias: low complexity; it reads TGVSTEAVSTSTST. Disordered stretches follow at residues 72–107 and 119–138; these read TGVS…PTHT and LRDD…DGDK. Over residues 92–107 the composition is skewed to polar residues; sequence HNAASDNYVSQSPTHT.

The protein belongs to the CofC family. As to quaternary structure, homodimer.

The enzyme catalyses (2S)-2-phospholactate + GTP + H(+) = (2S)-lactyl-2-diphospho-5'-guanosine + diphosphate. It participates in cofactor biosynthesis; coenzyme F420 biosynthesis. Its function is as follows. Guanylyltransferase that catalyzes the activation of (2S)-2-phospholactate (2-PL) as (2S)-lactyl-2-diphospho-5'-guanosine, via the condensation of 2-PL with GTP. It is involved in the biosynthesis of coenzyme F420, a hydride carrier cofactor. In Haloquadratum walsbyi (strain DSM 16790 / HBSQ001), this protein is 2-phospho-L-lactate guanylyltransferase.